Here is a 266-residue protein sequence, read N- to C-terminus: GTP cyclohydrolase III (266 aa).

The protein belongs to the archaeal-type GTP cyclohydrolase family.

It catalyses the reaction GTP + 3 H2O = 2-amino-5-formylamino-6-(5-phospho-D-ribosylamino)pyrimidin-4(3H)-one + 2 phosphate + 2 H(+). In terms of biological role, catalyzes the formation of 2-amino-5-formylamino-6-ribofuranosylamino-4(3H)-pyrimidinone ribonucleotide monophosphate and inorganic phosphate from GTP. Also has an independent pyrophosphate phosphohydrolase activity. The sequence is that of GTP cyclohydrolase III from Methanococcus vannielii (strain ATCC 35089 / DSM 1224 / JCM 13029 / OCM 148 / SB).